The following is a 945-amino-acid chain: Valine--tRNA ligase (945 aa).

The 'HIGH' region motif lies at 42 to 52; sequence PNVTGTLHMGH. The 'KMSKS' region signature appears at 552 to 556; the sequence is KMSKS. An ATP-binding site is contributed by lysine 555. The stretch at 879-945 forms a coiled coil; that stretch reads DKAAETARLS…VQNQLAKLKD (67 aa).

It belongs to the class-I aminoacyl-tRNA synthetase family. ValS type 1 subfamily. As to quaternary structure, monomer.

It is found in the cytoplasm. It catalyses the reaction tRNA(Val) + L-valine + ATP = L-valyl-tRNA(Val) + AMP + diphosphate. Catalyzes the attachment of valine to tRNA(Val). As ValRS can inadvertently accommodate and process structurally similar amino acids such as threonine, to avoid such errors, it has a 'posttransfer' editing activity that hydrolyzes mischarged Thr-tRNA(Val) in a tRNA-dependent manner. The sequence is that of Valine--tRNA ligase from Neisseria meningitidis serogroup B (strain ATCC BAA-335 / MC58).